The sequence spans 393 residues: Phosphoenolpyruvate/phosphate translocator 3, chloroplastic (393 aa).

Residues 1–65 (MQRAAAASRA…LSGGRAVTAR (65 aa)) constitute a chloroplast transit peptide. 7 helical membrane passes run 89-109 (LAETAQLGAMIVAWYLLNIYF), 124-144 (YTITAFQLAFGSFVIFLMWAL), 164-183 (AAGHMLGTVFTNMSLSKVAV), 195-217 (FFTVLLSAFFLGETPSLLVLGSL), 232-249 (LSFNWIGFWSAMASNLLY), 270-290 (INLFSILTILSFLLSLPLMLF), and 362-382 (TPISPVNALGTGVALGGVFLY). The EamA domain maps to 123–228 (PYTITAFQLA…PIVGGVALAS (106 aa)).

Belongs to the TPT transporter family. PPT (TC 2.A.7.9) subfamily.

The protein localises to the plastid. It is found in the chloroplast membrane. In terms of biological role, phosphoenolpyruvate/phosphate translocator that transports phosphoenolpyruvate (PEP) and dihydroxyacetone phosphate. The sequence is that of Phosphoenolpyruvate/phosphate translocator 3, chloroplastic (PPT3) from Oryza sativa subsp. japonica (Rice).